Reading from the N-terminus, the 400-residue chain is DNA alpha-glucosyltransferase (400 aa).

In terms of assembly, interacts with clamp protein gp45.

It catalyses the reaction Transfers an alpha-D-glucosyl residue from UDP-glucose to a hydroxymethylcytosine residue in DNA.. Its pathway is genetic information processing; DNA modification. Catalyzes the transfer of glucose from uridine diphosphoglucose to 5-hydroxymethyl cytosine of T4 DNA to yield glucosyl 5-hydroxymethyl cytosine (glc-HMC). This DNA process seems to occur immediately after DNA synthesis since the DNA alpha-glucosyltransferase interacts with the clamp protein gp45. The glc-HMC modification protects the phage genome against its own nucleases and the host restriction endonuclease system. The glc-HMC modification also protects against the host CRISPR-Cas9 defense system. This chain is DNA alpha-glucosyltransferase (agt), found in Escherichia coli (Bacteriophage T4).